The chain runs to 467 residues: L-seryl-tRNA(Sec) selenium transferase (467 aa).

An N6-(pyridoxal phosphate)lysine modification is found at K298.

The protein belongs to the SelA family. Pyridoxal 5'-phosphate is required as a cofactor.

The protein resides in the cytoplasm. It carries out the reaction L-seryl-tRNA(Sec) + selenophosphate + H(+) = L-selenocysteinyl-tRNA(Sec) + phosphate. The protein operates within aminoacyl-tRNA biosynthesis; selenocysteinyl-tRNA(Sec) biosynthesis; selenocysteinyl-tRNA(Sec) from L-seryl-tRNA(Sec) (bacterial route): step 1/1. Functionally, converts seryl-tRNA(Sec) to selenocysteinyl-tRNA(Sec) required for selenoprotein biosynthesis. The sequence is that of L-seryl-tRNA(Sec) selenium transferase from Alkaliphilus oremlandii (strain OhILAs) (Clostridium oremlandii (strain OhILAs)).